The following is a 306-amino-acid chain: 2-phospho-L-lactate transferase (306 aa).

Residues Asp-54 and Arg-93 each coordinate 7,8-didemethyl-8-hydroxy-5-deazariboflavin.

Belongs to the CofD family. Homodimer. It depends on Mg(2+) as a cofactor.

The enzyme catalyses (2S)-lactyl-2-diphospho-5'-guanosine + 7,8-didemethyl-8-hydroxy-5-deazariboflavin = oxidized coenzyme F420-0 + GMP + H(+). The protein operates within cofactor biosynthesis; coenzyme F420 biosynthesis. Its function is as follows. Catalyzes the transfer of the 2-phospholactate moiety from (2S)-lactyl-2-diphospho-5'-guanosine to 7,8-didemethyl-8-hydroxy-5-deazariboflavin (FO) with the formation of oxidized coenzyme F420-0 and GMP. In Methanothermobacter thermautotrophicus (strain ATCC 29096 / DSM 1053 / JCM 10044 / NBRC 100330 / Delta H) (Methanobacterium thermoautotrophicum), this protein is 2-phospho-L-lactate transferase.